A 746-amino-acid chain; its full sequence is Exostosin-1 (746 aa).

Residues 1–7 (MQAKKRY) are Cytoplasmic-facing. Residues 8–28 (FILLSAGSCLALLFYFGGVQF) traverse the membrane as a helical; Signal-anchor for type II membrane protein segment. Residues 29-746 (RASRSHSRRE…RKKYRDIERL (718 aa)) lie on the Lumenal side of the membrane. N-linked (GlcNAc...) asparagine glycosylation is present at Asn-89. 2 disulfide bridges follow: Cys-98-Cys-103 and Cys-109-Cys-152. A protein contacts are provided by Leu-166 and Tyr-203. The UDP site is built by Lys-267, Lys-269, Tyr-271, and Arg-280. Cys-298 and Cys-312 form a disulfide bridge. His-300 is an a protein binding site. UDP contacts are provided by Tyr-319 and Tyr-324. Asn-330 carries an N-linked (GlcNAc...) asparagine glycan. 2 disulfide bridges follow: Cys-334/Cys-355 and Cys-652/Cys-704. The UDP site is built by Arg-346 and Glu-349.

The protein belongs to the glycosyltransferase 47 family. Part of the heparan sulfate polymerase, a dimeric complex composed of EXT1 and EXT2. Could also form homooligomeric complexes. Interacts with NDST1. Post-translationally, N-glycosylated.

It is found in the golgi apparatus membrane. The protein resides in the golgi apparatus. It localises to the cis-Golgi network membrane. Its subcellular location is the endoplasmic reticulum membrane. The catalysed reaction is 3-O-{alpha-D-GlcNAc-[(1-&gt;4)-beta-D-GlcA-(1-&gt;4)-alpha-D-GlcNAc](n)-(1-&gt;4)-beta-D-GlcA-(1-&gt;3)-beta-D-Gal-(1-&gt;3)-beta-D-Gal-(1-&gt;4)-beta-D-Xyl}-L-seryl-[protein] + UDP-alpha-D-glucuronate = 3-O-{[(1-&gt;4)-beta-D-GlcA-(1-&gt;4)-alpha-D-GlcNAc](n+1)-(1-&gt;4)-beta-D-GlcA-(1-&gt;3)-beta-D-Gal-(1-&gt;3)-beta-D-Gal-(1-&gt;4)-beta-D-Xyl}-L-seryl-[protein] + UDP + H(+). It functions in the pathway protein modification; protein glycosylation. Its function is as follows. Glycosyltransferase forming with EXT2 the heterodimeric heparan sulfate polymerase which catalyzes the elongation of the heparan sulfate glycan backbone. Glycan backbone extension consists in the alternating transfer of (1-&gt;4)-beta-D-GlcA and (1-&gt;4)-alpha-D-GlcNAc residues from their respective UDP-sugar donors. Both EXT1 and EXT2 are required for the full activity of the polymerase since EXT1 bears the N-acetylglucosaminyl-proteoglycan 4-beta-glucuronosyltransferase activity within the complex while EXT2 carries the glucuronosyl-N-acetylglucosaminyl-proteoglycan 4-alpha-N-acetylglucosaminyltransferase activity. Heparan sulfate proteoglycans are ubiquitous components of the extracellular matrix and play an important role in tissue homeostasis and signaling. The polypeptide is Exostosin-1 (Mus musculus (Mouse)).